The primary structure comprises 498 residues: ATP synthase subunit beta, chloroplastic (498 aa).

172 to 179 contributes to the ATP binding site; sequence GGAGVGKT.

Belongs to the ATPase alpha/beta chains family. F-type ATPases have 2 components, CF(1) - the catalytic core - and CF(0) - the membrane proton channel. CF(1) has five subunits: alpha(3), beta(3), gamma(1), delta(1), epsilon(1). CF(0) has four main subunits: a(1), b(1), b'(1) and c(9-12).

The protein resides in the plastid. It is found in the chloroplast thylakoid membrane. It catalyses the reaction ATP + H2O + 4 H(+)(in) = ADP + phosphate + 5 H(+)(out). Produces ATP from ADP in the presence of a proton gradient across the membrane. The catalytic sites are hosted primarily by the beta subunits. This is ATP synthase subunit beta, chloroplastic from Liriodendron tulipifera (Tuliptree).